The following is a 95-amino-acid chain: Small ribosomal subunit protein uS19 (95 aa).

The protein belongs to the universal ribosomal protein uS19 family.

In terms of biological role, protein S19 forms a complex with S13 that binds strongly to the 16S ribosomal RNA. This is Small ribosomal subunit protein uS19 from Thermotoga sp. (strain RQ2).